Here is a 378-residue protein sequence, read N- to C-terminus: 3-dehydroquinate synthase (378 aa).

Residues 115-119 (GVVGD), 139-140 (TS), lysine 152, and lysine 161 each bind NAD(+). Positions 194, 256, and 275 each coordinate Zn(2+).

The protein belongs to the sugar phosphate cyclases superfamily. Dehydroquinate synthase family. It depends on Co(2+) as a cofactor. Requires Zn(2+) as cofactor. The cofactor is NAD(+).

It localises to the cytoplasm. The catalysed reaction is 7-phospho-2-dehydro-3-deoxy-D-arabino-heptonate = 3-dehydroquinate + phosphate. The protein operates within metabolic intermediate biosynthesis; chorismate biosynthesis; chorismate from D-erythrose 4-phosphate and phosphoenolpyruvate: step 2/7. Its function is as follows. Catalyzes the conversion of 3-deoxy-D-arabino-heptulosonate 7-phosphate (DAHP) to dehydroquinate (DHQ). The protein is 3-dehydroquinate synthase of Brucella canis (strain ATCC 23365 / NCTC 10854 / RM-666).